Reading from the N-terminus, the 69-residue chain is uncharacterized protein (69 aa).

An N-terminal signal peptide occupies residues 1–19; sequence MKRIWVSLMIAITACSAHA.

This is an uncharacterized protein from Pasteurella multocida (strain Pm70).